The primary structure comprises 110 residues: Large ribosomal subunit protein uL24 (110 aa).

Belongs to the universal ribosomal protein uL24 family. Part of the 50S ribosomal subunit.

In terms of biological role, one of two assembly initiator proteins, it binds directly to the 5'-end of the 23S rRNA, where it nucleates assembly of the 50S subunit. Functionally, one of the proteins that surrounds the polypeptide exit tunnel on the outside of the subunit. The sequence is that of Large ribosomal subunit protein uL24 from Roseiflexus castenholzii (strain DSM 13941 / HLO8).